Consider the following 494-residue polypeptide: Probable serine/threonine-protein kinase BSK3 (494 aa).

G2 carries N-myristoyl glycine lipidation. A Protein kinase domain is found at 61–316 (ENIVSEHGEK…SLVQALAPLQ (256 aa)). Residues 67–75 (HGEKAPNVV) and K89 each bind ATP. D183 serves as the catalytic Proton acceptor. S213 and S215 each carry phosphoserine. The stretch at 423–456 (PTIYARRCLSYLMNDKAEQALSDAMQALVISPTW) is one TPR repeat.

As to quaternary structure, interacts with BRI1 and BSL1. Phosphorylated at Ser-213 and Ser-215 by BRI1. Phosphorylation at Ser-215 is required for its function in the regulation of brassinosteroid signaling. Phosphorylation by BRI1 disrupts the interaction between its TPR and kinase domains, thereby increasing the binding between its kinase domain and BSL1.

It localises to the cell membrane. It carries out the reaction L-seryl-[protein] + ATP = O-phospho-L-seryl-[protein] + ADP + H(+). The enzyme catalyses L-threonyl-[protein] + ATP = O-phospho-L-threonyl-[protein] + ADP + H(+). Its function is as follows. Probable serine/threonine kinase that acts as a positive regulator of brassinosteroid (BR) signaling downstream of BRI1. This Oryza sativa subsp. japonica (Rice) protein is Probable serine/threonine-protein kinase BSK3.